The primary structure comprises 221 residues: MTSLSKEAVLVHAALEERGLETPLRGEVLDRETRKRRIKEHMTEIMQLLNLDLSDDSLAETPHRIAKMYVDEIFSGLDYANFPKITVIENKMKVDEMVTVRDITLTSTCEHHFVTIDGKATVAYIPKDAVIGLSKINRIVQFFSQRPQVQERLTQQILVALQTLLGTNNVAVSIDAVHYCVKARGIRDATSATTTTSLGGLFKSSQNTRQEFLRAVRHHQG.

Zn(2+)-binding residues include C109, H112, and C180.

This sequence belongs to the GTP cyclohydrolase I family. In terms of assembly, toroid-shaped homodecamer, composed of two pentamers of five dimers.

The enzyme catalyses GTP + H2O = 7,8-dihydroneopterin 3'-triphosphate + formate + H(+). It functions in the pathway cofactor biosynthesis; 7,8-dihydroneopterin triphosphate biosynthesis; 7,8-dihydroneopterin triphosphate from GTP: step 1/1. The polypeptide is GTP cyclohydrolase 1 (Serratia proteamaculans (strain 568)).